Reading from the N-terminus, the 134-residue chain is Large-conductance mechanosensitive channel (134 aa).

2 helical membrane-spanning segments follow: residues 16–36 (VIDL…VTAL) and 81–101 (GDFI…FIVV).

It belongs to the MscL family. Homopentamer.

It localises to the cell inner membrane. Functionally, channel that opens in response to stretch forces in the membrane lipid bilayer. May participate in the regulation of osmotic pressure changes within the cell. In Stenotrophomonas maltophilia (strain K279a), this protein is Large-conductance mechanosensitive channel.